A 662-amino-acid polypeptide reads, in one-letter code: Probable dolichyl-phosphate-mannose--protein mannosyltransferase 7 (662 aa).

The Lumenal segment spans residues 1–26 (MKDLRLQGPYRKYIPYNIFQQCGIGH). The helical transmembrane segment at 27-47 (LKTLDYIFAFLIVITNFTLIW) threads the bilayer. Residues 48–159 (KSHSSSFWNR…GTIISFDSLE (112 aa)) are Cytoplasmic-facing. Residues 160–180 (WCLFSVVIYSFISISIAKLGT) traverse the membrane as a helical segment. At 181–195 (TNWFANVITLSISLG) the chain is on the lumenal side. The chain crosses the membrane as a helical span at residues 196–216 (LAISSKFIGIVTWAFVILSFV). The Cytoplasmic portion of the chain corresponds to 217 to 235 (RQFDRLISDVKVTTIQIIK). A helical transmembrane segment spans residues 236–256 (FVILCLLFVLIIPGSIFIISY). The Lumenal segment spans residues 257 to 482 (SNLLSNFKTD…MEYPVIPRTT (226 aa)). An MIR 1 domain is found at 289 to 344 (PSRLYYGSTITLRHLDSMVGYLASHDISYPSDVDEQLVALSFEEFAADNEWLIEHP). N-linked (GlcNAc...) asparagine glycosylation is present at N347. MIR domains lie at 359–418 (LIPV…VLLI) and 432–488 (DKYI…IDSV). Residues 483–503 (FLIDSVQLPVDFQVPMIEYYI) traverse the membrane as a helical segment. Over 504-565 (GKISSSAEFN…KWPITLDTDS (62 aa)) the chain is Cytoplasmic. The chain crosses the membrane as a helical span at residues 566–586 (PVWFNFAWYGSLLSMIIFMCV). The Lumenal portion of the chain corresponds to 587–617 (QCKRMISWNPWTTAEPSFSIKWEVYNEFGWE). A helical transmembrane segment spans residues 618–638 (CIVGWFLHFYIFTMSPHFNLG). At 639–662 (KKLYFQSFFFSVLCLLESLDCLAK) the chain is on the cytoplasmic side.

It belongs to the glycosyltransferase 39 family.

The protein resides in the endoplasmic reticulum membrane. The enzyme catalyses a di-trans,poly-cis-dolichyl beta-D-mannosyl phosphate + L-seryl-[protein] = 3-O-(alpha-D-mannosyl)-L-seryl-[protein] + a di-trans,poly-cis-dolichyl phosphate + H(+). The catalysed reaction is a di-trans,poly-cis-dolichyl beta-D-mannosyl phosphate + L-threonyl-[protein] = 3-O-(alpha-D-mannosyl)-L-threonyl-[protein] + a di-trans,poly-cis-dolichyl phosphate + H(+). It functions in the pathway protein modification; protein glycosylation. Probable protein O-mannosyltransferase involved in O-glycosylation which is essential for cell wall rigidity. Transfers mannose from Dol-P-mannose to Ser or Thr residues on proteins. This chain is Probable dolichyl-phosphate-mannose--protein mannosyltransferase 7, found in Saccharomyces cerevisiae (strain ATCC 204508 / S288c) (Baker's yeast).